The following is a 215-amino-acid chain: Flagellin B1 (215 aa).

The propeptide occupies 1 to 12; sequence MSVKNFMNNKKG.

It belongs to the archaeal flagellin family.

The protein resides in the archaeal flagellum. In terms of biological role, flagellin is the subunit protein which polymerizes to form the filaments of archaeal flagella. In Methanococcus vannielii (strain ATCC 35089 / DSM 1224 / JCM 13029 / OCM 148 / SB), this protein is Flagellin B1 (flaB1).